We begin with the raw amino-acid sequence, 141 residues long: MAKKVVGEIKLQIAATKANPSPPVGPALGQQGVNIMEFCKAFNERTKDMAGYNIPVVITVYADKSFTFITKQPPATDLIKKAAGITKGADNPLKNKVGQLTKAQILEIVDKKIVDMNTKDKEQAAKIISGSARSMGITVVD.

It belongs to the universal ribosomal protein uL11 family. In terms of assembly, part of the ribosomal stalk of the 50S ribosomal subunit. Interacts with L10 and the large rRNA to form the base of the stalk. L10 forms an elongated spine to which L12 dimers bind in a sequential fashion forming a multimeric L10(L12)X complex. One or more lysine residues are methylated.

In terms of biological role, forms part of the ribosomal stalk which helps the ribosome interact with GTP-bound translation factors. In Campylobacter fetus subsp. fetus (strain 82-40), this protein is Large ribosomal subunit protein uL11.